The sequence spans 959 residues: Probable transport protein MmpL4 (959 aa).

The next 11 membrane-spanning stretches (helical) occupy residues 25–45, 205–225, 239–259, 300–320, 333–353, 381–401, 766–786, 790–810, 818–838, 872–892, and 902–922; these read FAVP…VFIP, VIVI…VILL, VVAL…VNLL, FHVI…LSFA, AVGM…VLTV, WPLP…LALP, WDLV…MLII, FVAA…SFGL, ILGI…LLAV, VVTN…VSDL, and IGLG…PSIA.

Belongs to the resistance-nodulation-cell division (RND) (TC 2.A.6) family. MmpL subfamily.

The protein resides in the cell membrane. In Mycobacterium leprae (strain TN), this protein is Probable transport protein MmpL4 (mmpL4).